An 842-amino-acid polypeptide reads, in one-letter code: Alanine--tRNA ligase (842 aa).

Positions 549, 553, 650, and 654 each coordinate Zn(2+).

The protein belongs to the class-II aminoacyl-tRNA synthetase family. Zn(2+) is required as a cofactor.

It localises to the cytoplasm. It carries out the reaction tRNA(Ala) + L-alanine + ATP = L-alanyl-tRNA(Ala) + AMP + diphosphate. Its function is as follows. Catalyzes the attachment of alanine to tRNA(Ala) in a two-step reaction: alanine is first activated by ATP to form Ala-AMP and then transferred to the acceptor end of tRNA(Ala). Also edits incorrectly charged Ser-tRNA(Ala) and Gly-tRNA(Ala) via its editing domain. In Campylobacter jejuni subsp. doylei (strain ATCC BAA-1458 / RM4099 / 269.97), this protein is Alanine--tRNA ligase.